Here is a 109-residue protein sequence, read N- to C-terminus: Oncomodulin-2 (109 aa).

EF-hand domains follow at residues M39–G74 and L78–S109. Ca(2+) contacts are provided by D52, D54, S56, Y58, E63, D91, D93, D95, K97, and E102.

Belongs to the parvalbumin family.

The polypeptide is Oncomodulin-2 (OCM2) (Homo sapiens (Human)).